A 522-amino-acid polypeptide reads, in one-letter code: Putative zinc finger protein 286B (522 aa).

A disordered region spans residues 1-30; it reads METDLAEMPEKGVLSSQDSPHFQEKSTEEG. C2H2-type zinc fingers lie at residues 244–266, 272–294, 299–321, 327–349, 355–377, 383–405, 411–433, 439–461, 467–489, and 495–517; these read HKCN…QRVH, YTCN…QRTH, FECR…QRIH, YECN…QLIH, YECN…QRTH, YKCQ…QRVH, YECS…QRIH, YKCS…QRTH, and FRCN…QRVH.

This sequence belongs to the krueppel C2H2-type zinc-finger protein family.

The protein resides in the nucleus. Its function is as follows. May be involved in transcriptional regulation. The sequence is that of Putative zinc finger protein 286B (ZNF286B) from Homo sapiens (Human).